We begin with the raw amino-acid sequence, 277 residues long: Inositol monophosphatase 1 (277 aa).

Mg(2+) contacts are provided by glutamate 70, aspartate 90, isoleucine 92, and aspartate 93. Residue glutamate 70 participates in substrate binding. Substrate is bound by residues 92-95, 194-196, glutamate 213, and aspartate 220; these read IDGT and GTA. Aspartate 220 provides a ligand contact to Mg(2+).

It belongs to the inositol monophosphatase superfamily. As to quaternary structure, homodimer. Mg(2+) is required as a cofactor. As to expression, ubiquitous.

The protein resides in the cytoplasm. It catalyses the reaction a myo-inositol phosphate + H2O = myo-inositol + phosphate. The enzyme catalyses 1D-myo-inositol 1-phosphate + H2O = myo-inositol + phosphate. The catalysed reaction is 1D-myo-inositol 2-phosphate + H2O = myo-inositol + phosphate. It carries out the reaction 1D-myo-inositol 3-phosphate + H2O = myo-inositol + phosphate. It catalyses the reaction 1D-myo-inositol 4-phosphate + H2O = myo-inositol + phosphate. The enzyme catalyses 1D-myo-inositol 5-phosphate + H2O = myo-inositol + phosphate. The catalysed reaction is 1D-myo-inositol 6-phosphate + H2O = myo-inositol + phosphate. It carries out the reaction scyllo-inositol 1-phosphate + H2O = scyllo-inositol + phosphate. It catalyses the reaction alpha-D-galactose 1-phosphate + H2O = D-galactose + phosphate. The enzyme catalyses alpha-D-glucose 1-phosphate + H2O = D-glucose + phosphate. The catalysed reaction is D-glucose 6-phosphate + H2O = D-glucose + phosphate. It carries out the reaction beta-D-fructose 1-phosphate + H2O = D-fructose + phosphate. It catalyses the reaction glycerol 2-phosphate + H2O = glycerol + phosphate. The enzyme catalyses adenosine 2'-phosphate + H2O = adenosine + phosphate. It functions in the pathway polyol metabolism; myo-inositol biosynthesis; myo-inositol from D-glucose 6-phosphate: step 2/2. Activity with myo-inositol monophosphate and D-galactose 1-phosphate is inhibited by Li(+), Ca(2+) and Mn(2+), but also by Mg(2+) at concentrations above 3 mM. Its function is as follows. Phosphatase involved in the dephosphorylation of myo-inositol monophosphate to generate myo-inositol. Is also able to dephosphorylate scyllo-inositol-phosphate, myo-inositol 1,4-diphosphate, scyllo-inositol-1,3-diphosphate and scyllo-inositol-1,4-diphosphate. Also dephosphorylates in vitro other sugar-phosphates including D-galactose-1-phosphate, glucose-1-phosphate, glucose-6-phosphate, fructose-1-phosphate, beta-glycerophosphate and 2'-AMP. Responsible for the provision of inositol required for synthesis of phosphatidylinositol and polyphosphoinositides, and involved in maintaining normal brain function. Has been implicated as the pharmacological target for lithium Li(+) action in brain. Is equally active with myo-inositol monophosphate and D-galactose 1-phosphate. The polypeptide is Inositol monophosphatase 1 (Impa1) (Rattus norvegicus (Rat)).